A 32-amino-acid chain; its full sequence is Photosystem I reaction center subunit XII (32 aa).

A helical transmembrane segment spans residues 4–26 (ISDSQIIVILLSVFITSILALRL).

It belongs to the PsaM family.

Its subcellular location is the plastid. It localises to the chloroplast thylakoid membrane. The sequence is that of Photosystem I reaction center subunit XII from Marchantia polymorpha (Common liverwort).